A 212-amino-acid chain; its full sequence is Thymidylate kinase (212 aa).

15–22 (GIDGAGKS) contacts ATP.

Belongs to the thymidylate kinase family.

The enzyme catalyses dTMP + ATP = dTDP + ADP. In terms of biological role, phosphorylation of dTMP to form dTDP in both de novo and salvage pathways of dTTP synthesis. In Chromobacterium violaceum (strain ATCC 12472 / DSM 30191 / JCM 1249 / CCUG 213 / NBRC 12614 / NCIMB 9131 / NCTC 9757 / MK), this protein is Thymidylate kinase.